Reading from the N-terminus, the 513-residue chain is Glutamyl-tRNA(Gln) amidotransferase subunit A (513 aa).

Active-site charge relay system residues include Lys-85 and Ser-160. Catalysis depends on Ser-184, which acts as the Acyl-ester intermediate.

This sequence belongs to the amidase family. GatA subfamily. In terms of assembly, heterotrimer of A, B and C subunits.

It carries out the reaction L-glutamyl-tRNA(Gln) + L-glutamine + ATP + H2O = L-glutaminyl-tRNA(Gln) + L-glutamate + ADP + phosphate + H(+). Its function is as follows. Allows the formation of correctly charged Gln-tRNA(Gln) through the transamidation of misacylated Glu-tRNA(Gln) in organisms which lack glutaminyl-tRNA synthetase. The reaction takes place in the presence of glutamine and ATP through an activated gamma-phospho-Glu-tRNA(Gln). This is Glutamyl-tRNA(Gln) amidotransferase subunit A from Bifidobacterium longum (strain NCC 2705).